The chain runs to 252 residues: 14-3-3 protein homolog 1 (252 aa).

Belongs to the 14-3-3 family.

The chain is 14-3-3 protein homolog 1 from Schistosoma mansoni (Blood fluke).